A 357-amino-acid chain; its full sequence is Protein phosphatase 1 regulatory subunit 42 (357 aa).

LRR repeat units lie at residues 29–50, 51–72, 73–94, 95–116, 117–138, 147–168, and 169–190; these read KITHINFSDRNIDSIDDLSLCR, NLSVLYLYDNRISQVTNLNYTT, NLTHLYLQNNCISCIENLSSLK, KLEKLYLGGNYIAVIEGLEGLE, ELRELHVESQRLPLGEKLLFDP, SLSTLNISNNNIDDIKDLEILE, and NLNHLIAVDNQLMHVKDLELLL. The region spanning 204–242 is the LRRCT domain; sequence NPVCLKPKYRDKLILTSKSLEFLDGKEIKDMERQFLMNW. Residues 329–357 are disordered; that stretch reads ESSLTKNDIHEPHLLQNPKVKENLSEKKE. The span at 335 to 357 shows a compositional bias: basic and acidic residues; the sequence is NDIHEPHLLQNPKVKENLSEKKE.

As to quaternary structure, interacts with PPP1CC isoform gamma-2; the interaction is direct. Interacts with actin, dynein, KIF5B, KIFC1 and tubulin. Associates with microtubules. Post-translationally, phosphorylated; during the first round of spermatogenesis with a marginal increase at 21 days after birth. Testis-specific. Expressed in spermatids (at protein level). Testis-specific.

Its subcellular location is the cytoplasm. The protein resides in the cytoskeleton. The protein localises to the microtubule organizing center. It localises to the centrosome. In terms of biological role, regulates phosphatase activity of protein phosphatase 1 (PP1) complexes in the testis. This is Protein phosphatase 1 regulatory subunit 42 (Ppp1r42) from Mus musculus (Mouse).